Reading from the N-terminus, the 145-residue chain is Hemoglobin subunit beta (145 aa).

Residues 1 to 145 (MLTAEEKAAV…VANALAHRYH (145 aa)) form the Globin domain. Thr-11 carries the post-translational modification Phosphothreonine. N6-acetyllysine is present on Lys-58. His-62 contributes to the heme b binding site. At Lys-81 the chain carries N6-acetyllysine. His-91 provides a ligand contact to heme b. Cys-92 carries the post-translational modification S-nitrosocysteine.

Belongs to the globin family. As to quaternary structure, heterotetramer of two alpha chains and two beta chains. In terms of tissue distribution, red blood cells.

In terms of biological role, involved in oxygen transport from the lung to the various peripheral tissues. The protein is Hemoglobin subunit beta (HBB) of Ovis aries musimon (Mouflon).